Reading from the N-terminus, the 382-residue chain is Glutamine synthetase cytosolic isozyme (382 aa).

The region spanning 36 to 118 (GKICAEYVWI…VMCDCYEPPK (83 aa)) is the GS beta-grasp domain. A GS catalytic domain is found at 135–382 (TRFACAEVME…RLIVETTILL (248 aa)).

The protein belongs to the glutamine synthetase family. Homooctamer.

The protein localises to the cytoplasm. It catalyses the reaction L-glutamate + NH4(+) + ATP = L-glutamine + ADP + phosphate + H(+). This chain is Glutamine synthetase cytosolic isozyme (GLN1), found in Chlamydomonas reinhardtii (Chlamydomonas smithii).